The following is a 465-amino-acid chain: MSRNTKNVLVVSFGFLLLFTAYGGLQSLQSSLNAEEGMGVISLSVIYAAIILSSMFLPPIMIKNLGCKWTIVVSMGCYVAYSFGNLAPGWASLMSTSAILGMGGSPLWSAKCTYLTISGNRQGQKHNKKGQDLINQYFGIFFFIFQSSGVWGNLMSSLIFGQDQNIVPKENLEFCGVSTCLDNFTVIGNSTRPSKHLVDTLLGCYIGVGLLAIIFVAVFLDNIDRDEAKEFRSTKGNKSFWDTFLATFKLLRDPRLLLLIPLTMYSGFEQSFLSGEYTKNYVTCALGIHNVGFVMICFAASNSLCSFAFGRLAQYTGRIALFCLAAAINLGSFLGLLYWKPHPDQLAIFFVFPALWGMADAVWQTQTNALYGILFAKNKEAAFANYRMWESLGFVIAFAYSTFICLSTKIYIALAVLALTMVTYLYVEYNEYKHPTPQVTEDFLKPIKPKLKDDKEDNIISQTQL.

5 helical membrane passes run 8 to 28, 40 to 60, 71 to 91, 96 to 118, and 140 to 160; these read VLVV…LQSL, VISL…LPPI, IVVS…PGWA, TSAI…LTIS, and IFFF…SLIF. N-linked (GlcNAc...) asparagine glycosylation is found at Asn-183 and Asn-189. The helical transmembrane segment at 200-220 threads the bilayer; the sequence is TLLGCYIGVGLLAIIFVAVFL. N-linked (GlcNAc...) asparagine glycosylation occurs at Asn-237. The next 5 helical transmembrane spans lie at 256-276, 281-301, 319-339, 343-363, and 410-427; these read LLLL…LSGE, YVTC…FAAS, IALF…LLYW, PDQL…DAVW, and IYIA…YLYV.

The protein belongs to the unc-93 family.

Its subcellular location is the membrane. The chain is Protein unc-93 homolog A (unc93a) from Danio rerio (Zebrafish).